The chain runs to 181 residues: UPF0397 protein SSU98_0390 (181 aa).

5 helical membrane passes run 9–29 (VVAT…INIP), 46–66 (LLAV…GHTL), 70–90 (LTYG…LVVG), 108–128 (ILFF…VIAP), and 147–167 (LVAG…LLVV).

Belongs to the UPF0397 family.

It localises to the cell membrane. The polypeptide is UPF0397 protein SSU98_0390 (Streptococcus suis (strain 98HAH33)).